The chain runs to 65 residues: Large ribosomal subunit protein bL35 (65 aa).

Residues 1–26 are disordered; sequence MPKMKTNKSAQKRFKKTGSGRFKCKQ. Residues 10–26 are compositionally biased toward basic residues; sequence AQKRFKKTGSGRFKCKQ.

The protein belongs to the bacterial ribosomal protein bL35 family.

The sequence is that of Large ribosomal subunit protein bL35 from Hydrogenovibrio crunogenus (strain DSM 25203 / XCL-2) (Thiomicrospira crunogena).